The chain runs to 297 residues: MADLTWHDALDPEQAEEITRLLAEAEEVDGVAPVGEAVHLRLRPGASGSAHLLARADGVLAGYAHLDLLGDSDGNLVAELAVRPGSRRAGVGSELAGALLGAAADRGKPVRFWAHGDREGASGLAARLGARRVRELWVMRRELAGLPEVPPLPEGVALRSFEPGRDEDAVVRVNARAFSWHPEQGAMTADDVRLKEAEDWFDADGFLLAVDGADRLLGFHWTKRHDESMGEVYVVGVDPDAQGGGLGKALTLAGLVHLKSTGLRDVHLYVESDNSPAVRVYTRLGFSRWKADVQYAL.

N-acetyltransferase domains lie at 8–153 (DALD…PPLP) and 156–297 (VALR…QYAL). Residue glutamate 36 participates in 1D-myo-inositol 2-(L-cysteinylamino)-2-deoxy-alpha-D-glucopyranoside binding. 80 to 82 (LAV) contacts acetyl-CoA. 1D-myo-inositol 2-(L-cysteinylamino)-2-deoxy-alpha-D-glucopyranoside-binding residues include glutamate 183, lysine 223, and glutamate 231. Acetyl-CoA-binding positions include 235–237 (VGV) and 242–248 (QGGGLGK). Residue tyrosine 269 coordinates 1D-myo-inositol 2-(L-cysteinylamino)-2-deoxy-alpha-D-glucopyranoside. 274–279 (NSPAVR) serves as a coordination point for acetyl-CoA.

Belongs to the acetyltransferase family. MshD subfamily. In terms of assembly, monomer.

It catalyses the reaction 1D-myo-inositol 2-(L-cysteinylamino)-2-deoxy-alpha-D-glucopyranoside + acetyl-CoA = mycothiol + CoA + H(+). Catalyzes the transfer of acetyl from acetyl-CoA to desacetylmycothiol (Cys-GlcN-Ins) to form mycothiol. The protein is Mycothiol acetyltransferase of Actinosynnema mirum (strain ATCC 29888 / DSM 43827 / JCM 3225 / NBRC 14064 / NCIMB 13271 / NRRL B-12336 / IMRU 3971 / 101).